The sequence spans 92 residues: Small ribosomal subunit protein uS19 (92 aa).

The protein belongs to the universal ribosomal protein uS19 family.

Functionally, protein S19 forms a complex with S13 that binds strongly to the 16S ribosomal RNA. This is Small ribosomal subunit protein uS19 from Lactococcus lactis subsp. cremoris (strain MG1363).